The chain runs to 286 residues: Nucleotide-binding protein Tgr7_0722 (286 aa).

ATP is bound at residue 8–15 (GLSGSGKS). Residue 60 to 63 (DVRS) coordinates GTP.

It belongs to the RapZ-like family.

Its function is as follows. Displays ATPase and GTPase activities. This is Nucleotide-binding protein Tgr7_0722 from Thioalkalivibrio sulfidiphilus (strain HL-EbGR7).